The following is a 519-amino-acid chain: Methionine--tRNA ligase (519 aa).

The 'HIGH' region signature appears at 11 to 21; sequence AYPNAAPHVGH. Positions 299-303 match the 'KMSKS' region motif; sequence KMSKS. Lysine 302 lines the ATP pocket. The disordered stretch occupies residues 500–519; it reads LPPPTGVFPRYQPPQPPEGK.

This sequence belongs to the class-I aminoacyl-tRNA synthetase family. MetG type 2B subfamily. As to quaternary structure, monomer.

It is found in the cytoplasm. It carries out the reaction tRNA(Met) + L-methionine + ATP = L-methionyl-tRNA(Met) + AMP + diphosphate. Its function is as follows. Is required not only for elongation of protein synthesis but also for the initiation of all mRNA translation through initiator tRNA(fMet) aminoacylation. The protein is Methionine--tRNA ligase of Mycobacterium tuberculosis (strain ATCC 25618 / H37Rv).